Consider the following 436-residue polypeptide: Protein translocase subunit SecY (436 aa).

A run of 10 helical transmembrane segments spans residues 18 to 38 (IAFT…PATG), 69 to 89 (LLQV…SIIV), 116 to 138 (YTRY…LART), 154 to 174 (ILTV…VMWF), 187 to 207 (MSLL…GQVV), 214 to 234 (VFAI…FVEE), 266 to 286 (MANV…GILI), 314 to 334 (PVYM…YVSI), 375 to 395 (VVGA…FAVI), and 396 to 416 (GTSQ…GVGL).

It belongs to the SecY/SEC61-alpha family. As to quaternary structure, component of the Sec protein translocase complex. Heterotrimer consisting of SecY, SecE and SecG subunits. The heterotrimers can form oligomers, although 1 heterotrimer is thought to be able to translocate proteins. Interacts with the ribosome. Interacts with SecDF, and other proteins may be involved. Interacts with SecA.

It localises to the cell membrane. Its function is as follows. The central subunit of the protein translocation channel SecYEG. Consists of two halves formed by TMs 1-5 and 6-10. These two domains form a lateral gate at the front which open onto the bilayer between TMs 2 and 7, and are clamped together by SecE at the back. The channel is closed by both a pore ring composed of hydrophobic SecY resides and a short helix (helix 2A) on the extracellular side of the membrane which forms a plug. The plug probably moves laterally to allow the channel to open. The ring and the pore may move independently. This is Protein translocase subunit SecY from Micrococcus luteus (Micrococcus lysodeikticus).